Consider the following 381-residue polypeptide: 3-dehydroquinate synthase (381 aa).

Residues Glu-81–Lys-86, Gly-115–Asp-119, Thr-139–Ser-140, Lys-152, and Lys-161 each bind NAD(+). Zn(2+)-binding residues include Glu-194, His-256, and His-274.

This sequence belongs to the sugar phosphate cyclases superfamily. Dehydroquinate synthase family. Co(2+) is required as a cofactor. The cofactor is Zn(2+). Requires NAD(+) as cofactor.

The protein localises to the cytoplasm. It catalyses the reaction 7-phospho-2-dehydro-3-deoxy-D-arabino-heptonate = 3-dehydroquinate + phosphate. The protein operates within metabolic intermediate biosynthesis; chorismate biosynthesis; chorismate from D-erythrose 4-phosphate and phosphoenolpyruvate: step 2/7. Functionally, catalyzes the conversion of 3-deoxy-D-arabino-heptulosonate 7-phosphate (DAHP) to dehydroquinate (DHQ). The chain is 3-dehydroquinate synthase from Rhodopseudomonas palustris (strain TIE-1).